The primary structure comprises 309 residues: Homoserine O-succinyltransferase (309 aa).

Cysteine 142 serves as the catalytic Acyl-thioester intermediate. Substrate contacts are provided by lysine 163 and serine 192. The active-site Proton acceptor is the histidine 235. Glutamate 237 is a catalytic residue. Arginine 249 lines the substrate pocket.

The protein belongs to the MetA family. As to quaternary structure, homodimer.

The protein localises to the cytoplasm. It catalyses the reaction L-homoserine + succinyl-CoA = O-succinyl-L-homoserine + CoA. It functions in the pathway amino-acid biosynthesis; L-methionine biosynthesis via de novo pathway; O-succinyl-L-homoserine from L-homoserine: step 1/1. Its function is as follows. Transfers a succinyl group from succinyl-CoA to L-homoserine, forming succinyl-L-homoserine. The protein is Homoserine O-succinyltransferase of Escherichia fergusonii (strain ATCC 35469 / DSM 13698 / CCUG 18766 / IAM 14443 / JCM 21226 / LMG 7866 / NBRC 102419 / NCTC 12128 / CDC 0568-73).